The primary structure comprises 1294 residues: Phosphoribosylformylglycinamidine synthase (1294 aa).

A disordered region spans residues 303-325; it reads WPGAATGSGGEIRDEGATGRGSK. ATP is bound by residues 305–316, 384–386, and Ala676; these read GAATGSGGEIRD and TGY. Residues Asp677, Glu716, Asn720, and Asp883 each contribute to the Mg(2+) site. Ser885 provides a ligand contact to ATP. Residues 1041 to 1294 enclose the Glutamine amidotransferase type-1 domain; that stretch reads VAVLREQGVN…MFRNARRQLG (254 aa). Cys1134 acts as the Nucleophile in catalysis. Active-site residues include His1259 and Glu1261.

In the N-terminal section; belongs to the FGAMS family. In terms of assembly, monomer.

It localises to the cytoplasm. It carries out the reaction N(2)-formyl-N(1)-(5-phospho-beta-D-ribosyl)glycinamide + L-glutamine + ATP + H2O = 2-formamido-N(1)-(5-O-phospho-beta-D-ribosyl)acetamidine + L-glutamate + ADP + phosphate + H(+). It functions in the pathway purine metabolism; IMP biosynthesis via de novo pathway; 5-amino-1-(5-phospho-D-ribosyl)imidazole from N(2)-formyl-N(1)-(5-phospho-D-ribosyl)glycinamide: step 1/2. Functionally, phosphoribosylformylglycinamidine synthase involved in the purines biosynthetic pathway. Catalyzes the ATP-dependent conversion of formylglycinamide ribonucleotide (FGAR) and glutamine to yield formylglycinamidine ribonucleotide (FGAM) and glutamate. In Pectobacterium atrosepticum (strain SCRI 1043 / ATCC BAA-672) (Erwinia carotovora subsp. atroseptica), this protein is Phosphoribosylformylglycinamidine synthase.